A 571-amino-acid chain; its full sequence is Protein tesmin/TSO1-like CXC 6 (571 aa).

5 disordered regions span residues 1–52 (MGEG…AAAS), 92–119 (IRHP…QKKK), 293–325 (NQGT…GGNA), 370–411 (LANQ…RSLS), and 507–571 (NGVS…KKDL). Residues 7-16 (GDKFPPKTDE) show a composition bias toward basic and acidic residues. The 125-residue stretch at 117-241 (KKKQCNCKHS…KCLDCKNFEG (125 aa)) folds into the CRC domain. Composition is skewed to polar residues over residues 293-319 (NQGT…QTGS), 373-388 (QKET…QGHV), and 508-539 (GVSQ…QTAK). Residues 540 to 557 (QPSQLTTTTTTPNTSSQT) show a composition bias toward low complexity.

This sequence belongs to the lin-54 family. In terms of tissue distribution, ubiquitous but expressed mostly in flowers.

The protein resides in the nucleus. Functionally, plays a role in development of both male and female reproductive tissues. The sequence is that of Protein tesmin/TSO1-like CXC 6 (TCX6) from Arabidopsis thaliana (Mouse-ear cress).